A 177-amino-acid chain; its full sequence is Interleukin-1 receptor antagonist protein (177 aa).

The N-terminal stretch at 1 to 25 (MRPSRSTRRHLISLLLFLFHSETAC) is a signal peptide. Cysteine 91 and cysteine 141 are oxidised to a cystine. Asparagine 109 is a glycosylation site (N-linked (GlcNAc...) asparagine).

Belongs to the IL-1 family.

It localises to the secreted. Anti-inflammatory antagonist of interleukin-1 family of proinflammatory cytokines such as interleukin-1beta/IL1B and interleukin-1alpha/IL1A. Protects from immune dysregulation and uncontrolled systemic inflammation triggered by IL1 for a range of innate stimulatory agents such as pathogens. The polypeptide is Interleukin-1 receptor antagonist protein (IL1RN) (Oryctolagus cuniculus (Rabbit)).